A 329-amino-acid chain; its full sequence is Prostaglandin reductase 1 (329 aa).

A Phosphothreonine modification is found at Thr-18. NADP(+)-binding positions include 152–155 (GAVG), Lys-178, Tyr-193, Asn-217, 239–245 (CGAISQY), 270–272 (FIV), and Asn-321. Lys-178 carries the post-translational modification N6-(2-hydroxyisobutyryl)lysine; alternate. Lys-178 carries the N6-acetyllysine; alternate modification.

This sequence belongs to the NADP-dependent oxidoreductase L4BD family. In terms of assembly, monomer or homodimer.

It localises to the cytoplasm. The enzyme catalyses 13,14-dihydro-15-oxo-prostaglandin E1 + NADP(+) = 15-oxoprostaglandin E1 + NADPH + H(+). It catalyses the reaction 13,14-dihydro-15-oxo-prostaglandin E2 + NADP(+) = 15-oxoprostaglandin E2 + NADPH + H(+). The catalysed reaction is 13,14-dihydro-15-oxo-prostaglandin F1alpha + NADP(+) = 15-oxoprostaglandin F1alpha + NADPH + H(+). It carries out the reaction 13,14-dihydro-15-oxo-PGF2alpha + NADP(+) = 15-oxoprostaglandin F2alpha + NADPH + H(+). The enzyme catalyses leukotriene B4 + NADP(+) = 12-oxo-leukotriene B4 + NADPH + H(+). It catalyses the reaction 20-hydroxy-leukotriene B4 + NADP(+) = 12-oxo-20-hydroxy-leukotriene B4 + NADPH + H(+). The catalysed reaction is 6-trans-leukotriene B4 + NADP(+) = 12-oxo-(5S)-hydroxy-(6E,8E,10E,14Z)-eicosatetraenoate + NADPH + H(+). It carries out the reaction (5S,12S)-dihydroxy-(6E,10E,12E,14Z)-eicosatetraenoate + NADP(+) = 12-oxo-(5S)-hydroxy-(6E,8E,10E,14Z)-eicosatetraenoate + NADPH + H(+). The enzyme catalyses an n-alkanal + NADP(+) = an alk-2-enal + NADPH + H(+). It catalyses the reaction hexanal + NADP(+) = (E)-hex-2-enal + NADPH + H(+). The catalysed reaction is octanal + NADP(+) = (2E)-octenal + NADPH + H(+). It carries out the reaction decanal + NADP(+) = (2E)-decenal + NADPH + H(+). The enzyme catalyses dodecanal + NADP(+) = (2E)-dodecenal + NADPH + H(+). It catalyses the reaction 4-hydroxynonanal + NADP(+) = (E)-4-hydroxynon-2-enal + NADPH + H(+). The catalysed reaction is pentan-2-one + NADP(+) = (E)-pent-3-en-2-one + NADPH + H(+). It carries out the reaction nonan-2-one + NADP(+) = (3E)-nonen-2-one + NADPH + H(+). NAD(P)H-dependent oxidoreductase involved in metabolic inactivation of pro- and anti-inflammatory eicosanoids: prostaglandins (PG), leukotrienes (LT) and lipoxins (LX). Catalyzes with high efficiency the reduction of the 13,14 double bond of 15-oxoPGs, including 15-oxo-PGE1, 15-oxo-PGE2, 15-oxo-PGF1-alpha and 15-oxo-PGF2-alpha. Catalyzes with lower efficiency the oxidation of the hydroxyl group at C12 of LTB4 and its derivatives, converting them into biologically less active 12-oxo-LTB4 metabolites. Reduces 15-oxo-LXA4 to 13,14 dihydro-15-oxo-LXA4, enhancing neutrophil recruitment at the inflammatory site. Plays a role in metabolic detoxification of alkenals and ketones. Reduces alpha,beta-unsaturated alkenals and ketones, particularly those with medium-chain length, showing highest affinity toward (2E)-decenal and (3E)-3-nonen-2-one. May inactivate 4-hydroxy-2-nonenal, a cytotoxic lipid constituent of oxidized low-density lipoprotein particles. The chain is Prostaglandin reductase 1 (Ptgr1) from Mus musculus (Mouse).